Here is a 153-residue protein sequence, read N- to C-terminus: Endoribonuclease YbeY (153 aa).

Positions 114, 118, and 124 each coordinate Zn(2+).

This sequence belongs to the endoribonuclease YbeY family. Zn(2+) is required as a cofactor.

It is found in the cytoplasm. Its function is as follows. Single strand-specific metallo-endoribonuclease involved in late-stage 70S ribosome quality control and in maturation of the 3' terminus of the 16S rRNA. In Shewanella putrefaciens (strain CN-32 / ATCC BAA-453), this protein is Endoribonuclease YbeY.